We begin with the raw amino-acid sequence, 148 residues long: UPF0260 protein YPK_2117 (148 aa).

This sequence belongs to the UPF0260 family.

This is UPF0260 protein YPK_2117 from Yersinia pseudotuberculosis serotype O:3 (strain YPIII).